Reading from the N-terminus, the 198-residue chain is Transcription factor IND (198 aa).

Residues 1 to 33 are disordered; that stretch reads MENGMYKKKGVCDSCVSSKSRSNHSPKRSMMEP. The region spanning 118-167 is the bHLH domain; it reads ISDDPQTVVARRRRERISEKIRILKRIVPGGAKMDTASMLDEAIRYTKFL.

In terms of assembly, homodimer. Heterodimer; possibly with ALC. In terms of tissue distribution, after fertilization, it is expressed in stripes about four cells wide at the margins of developing wild-type fruit. Also expressed in the inner valve layer, which becomes lignified later in fruit development. Detected in roots.

The protein resides in the nucleus. Transcription regulator required for seed dispersal. Involved in the differentiation of all three cell types required for fruit dehiscence. Acts as the key regulator in a network including SHP and ALC that controls specification of the valve margin. Works with ALC, SHP, and FUL to allow differentiation of the lignified valve layer, the spring-loaded mechanism of fruit that promotes opening. Regulates the expression of the YJ80 marker. The chain is Transcription factor IND (IND) from Arabidopsis thaliana (Mouse-ear cress).